The chain runs to 534 residues: Acyl-CoA-binding domain-containing protein 5 (534 aa).

Positions 41-130 (HETRFEAAVK…MKKIIETMPM (90 aa)) constitute an ACB domain. An acyl-CoA is bound at residue 52–61 (IQSLPKNGSF). Pro-63 bears the Phosphothreonine mark. Residues 72–76 (YSFYK), Lys-98, and Tyr-117 each bind an acyl-CoA. Phosphothreonine is present on residues Leu-137 and Glu-172. The interval 181–225 (TPNAKTVNGKAESSDSGAESEEEEAQEEVKGAEQSDNDKKMMKKS) is disordered. Residues 190–219 (KAESSDSGAESEEEEAQEEVKGAEQSDNDK) are a coiled coil. 7 positions are modified to phosphoserine: Ser-193, Ser-194, Ser-196, Ser-200, Ser-215, Ser-279, and Ser-313. Basic and acidic residues predominate over residues 207 to 225 (EEVKGAEQSDNDKKMMKKS). Residues 376 to 385 (EVKHGGEDGR) show a composition bias toward basic and acidic residues. Residues 376 to 442 (EVKHGGEDGR…ERWGSDRGSR (67 aa)) are disordered. Thr-400 carries the post-translational modification Phosphothreonine. Position 428 is a phosphoserine (Ser-428). The segment covering 431 to 441 (DGERWGSDRGS) has biased composition (basic and acidic residues). A coiled-coil region spans residues 447–476 (EQIALVLMRLQEDMQNVLQRLQKLETLTAL). At Lys-469 the chain carries N6-acetyllysine. Residues 506-526 (GVLTFAIIWPFIAQWLVYLYY) form a helical membrane-spanning segment.

Belongs to the ATG37 family.

The protein resides in the peroxisome membrane. Acyl-CoA binding protein which acts as the peroxisome receptor for pexophagy but is dispensable for aggrephagy and nonselective autophagy. Binds medium- and long-chain acyl-CoA esters. The sequence is that of Acyl-CoA-binding domain-containing protein 5 (ACBD5) from Homo sapiens (Human).